The primary structure comprises 116 residues: Large ribosomal subunit protein bL17 (116 aa).

This sequence belongs to the bacterial ribosomal protein bL17 family. In terms of assembly, part of the 50S ribosomal subunit. Contacts protein L32.

This Sulfurovum sp. (strain NBC37-1) protein is Large ribosomal subunit protein bL17.